The sequence spans 253 residues: Hydroxypyruvate/pyruvate aldolase (253 aa).

The active-site Proton acceptor is the H48. Residues E151 and D177 each coordinate a divalent metal cation.

It belongs to the HpcH/HpaI aldolase family. A divalent metal cation is required as a cofactor.

It catalyses the reaction D-glyceraldehyde + pyruvate = 2-dehydro-3-deoxy-L-galactonate. Functionally, aldolase which can catalyze in vitro the aldolisation reaction between hydroxypyruvate (HPA) or pyruvate (PA) and D-glyceraldehyde (D-GA). The condensation of pyruvate and D-glyceraldehyde produces 2-dehydro-3-deoxy-L-galactonate. Has weak activity with hydroxypyruvate and D-glyceraldehyde. The protein is Hydroxypyruvate/pyruvate aldolase of Sagittula stellata (strain ATCC 700073 / DSM 11524 / E-37).